A 380-amino-acid polypeptide reads, in one-letter code: Glutamine synthetase, chloroplastic (380 aa).

Residues 35–125 (MAAEYIWADG…VMCEVFAPDG (91 aa)) enclose the GS beta-grasp domain. In terms of domain architecture, GS catalytic spans 132-380 (TRAKLREIID…RLLIKTVLKG (249 aa)).

It belongs to the glutamine synthetase family. As to quaternary structure, homooctamer.

Its subcellular location is the plastid. It localises to the chloroplast. It carries out the reaction L-glutamate + NH4(+) + ATP = L-glutamine + ADP + phosphate + H(+). In Chlamydomonas reinhardtii (Chlamydomonas smithii), this protein is Glutamine synthetase, chloroplastic (GLN2).